Reading from the N-terminus, the 141-residue chain is MDALFVFIIILATAVICLFLFQAYTIYDNYHNIIEFNEKYGGLEYSRSPGGLYIDKRVFDPNDSETDPKAKWRCVNYNNNQYASASKFGYLATSSRNPVLFTNLEDCVYYNYTRGEIGTIWNPCAEYGEGSAECSTLKSHL.

Residues 1–21 traverse the membrane as a helical; Signal-anchor for type II membrane protein segment; sequence MDALFVFIIILATAVICLFLF. Residues 22-141 lie on the Virion surface side of the membrane; sequence QAYTIYDNYH…AECSTLKSHL (120 aa).

Belongs to the poxviridae A28 protein family. In terms of processing, contains two intramolecular disulfide bonds. They are created by the viral disulfide bond formation pathway, a poxvirus-specific pathway that operates on the cytoplasmic side of the MV membranes.

Its subcellular location is the virion membrane. Functionally, envelope protein required for virus entry into host cell and for cell-cell fusion (syncytium formation). In Fowlpox virus (strain NVSL) (FPV), this protein is Envelope protein A28 homolog.